The sequence spans 109 residues: Cell division protein ZapA (109 aa).

The stretch at 22–99 (EQQDALNMAA…IEQALLEQGR (78 aa)) forms a coiled coil.

Belongs to the ZapA family. Type 1 subfamily. As to quaternary structure, homodimer. Interacts with FtsZ.

Its subcellular location is the cytoplasm. Activator of cell division through the inhibition of FtsZ GTPase activity, therefore promoting FtsZ assembly into bundles of protofilaments necessary for the formation of the division Z ring. It is recruited early at mid-cell but it is not essential for cell division. In Yersinia pseudotuberculosis serotype O:1b (strain IP 31758), this protein is Cell division protein ZapA.